A 610-amino-acid polypeptide reads, in one-letter code: E3 ubiquitin-protein ligase hrd-1 (610 aa).

The N-terminal stretch at 1-23 (MRVSAGLMIGGSCVATAATILNA) is a signal peptide. Residues 24–41 (FLINKQFYPSIVYLSKSN) lie on the Lumenal side of the membrane. Residues 42-62 (ASMAVIYVQGIVLVYLMFQLL) form a helical membrane-spanning segment. Over 63–99 (KSILFGDLRAAEAEHLSERTWHAVLETCLAFTVFRDD) the chain is Cytoplasmic. Residues 100 to 120 (FSAIFVMQFIGLLFIKCFHWL) form a helical membrane-spanning segment. Residues 121–144 (ADDRVDMMERSPVITLRFHLRMMT) are Lumenal-facing. Residues 145–165 (VLAALGFADSYFVSSAYFTTI) form a helical membrane-spanning segment. The Cytoplasmic portion of the chain corresponds to 166-170 (TRGAS). The chain crosses the membrane as a helical span at residues 171–191 (AQIVFGFEYAILLALVLHVTI). Residues 192–215 (KYLLHMHDLRNPQSWDNKAVYLLY) are Lumenal-facing. The chain crosses the membrane as a helical span at residues 216–236 (AELFINLIRCLLYGFFAVVML). Over 237-610 (RVHTFPLFSV…ARLLGENANQ (374 aa)) the chain is Cytoplasmic. Residues 292–333 (CIICREEMTVDASPKRLPCSHVFHAHCLRSWFQRQQTCPTCR) form an RING-type; atypical zinc finger. 3 disordered regions span residues 386–408 (QPAG…GPFP), 452–480 (VNTT…LRRM), and 521–610 (RPVV…NANQ). Positions 452–474 (VNTTQGTSSETPPVNPSYSQLST) are enriched in polar residues. A compositionally biased stretch (low complexity) spans 560–589 (TESPSTSSTAPSTSSPVTASSTPTTSSTRT).

The protein belongs to the HRD1 family. Homodimer.

Its subcellular location is the endoplasmic reticulum membrane. The catalysed reaction is S-ubiquitinyl-[E2 ubiquitin-conjugating enzyme]-L-cysteine + [acceptor protein]-L-lysine = [E2 ubiquitin-conjugating enzyme]-L-cysteine + N(6)-ubiquitinyl-[acceptor protein]-L-lysine.. The protein operates within protein modification; protein ubiquitination. Acts as an E3 ubiquitin-protein ligase which accepts ubiquitin specifically from endoplasmic reticulum-associated ubc-7 E2 ligase and transfers it to substrates, promoting their degradation. Component of the endoplasmic reticulum quality control (ERQC) system, which is also called the ER-associated degradation (ERAD) system, involved in ubiquitin-dependent degradation of misfolded endoplasmic reticulum proteins. Also promotes the degradation of normal but naturally short-lived proteins. Protects cells from ER stress-induced apoptosis. Thought to play a role together with hsp-3 in developmental growth and function of intestinal cells and to play a role together with hsp-4 in gonad formation. Plays a key role in the degradation of the potassium channel slo-1, perhaps acting directly, in targeting slo-1 to the ER-associated degradation pathway (ERAD), and also indirectly, via activation of the transcription factor skn-1, which mediates proteasomal homeostasis. This is E3 ubiquitin-protein ligase hrd-1 (sel-11) from Caenorhabditis elegans.